Here is a 439-residue protein sequence, read N- to C-terminus: Eukaryotic translation initiation factor 2 subunit gamma (439 aa).

The 205-residue stretch at 11 to 215 (QATLNIGTIG…FIVNYIPEPV (205 aa)) folds into the tr-type G domain. The G1 stretch occupies residues 20 to 27 (GHVAHGKS). 23 to 28 (AHGKST) contacts GTP. Residues 48–52 (NITIK) form a G2 region. Residues 103–106 (DCPG) form a G3 region. GTP is bound by residues 159-162 (NKID) and 193-195 (AAQ). Residues 159-162 (NKID) are G4. Positions 193 to 195 (AAQ) are G5. The interval 415 to 427 (GEIKDGTCIEPEY) is interacts with CDC123.

This sequence belongs to the TRAFAC class translation factor GTPase superfamily. Classic translation factor GTPase family. EIF2G subfamily. Eukaryotic translation initiation factor 2 eIF2 is a heterotrimeric complex composed of an alpha, a beta and a gamma subunit. The factors eIF-1, eIF-2, eIF-3, TIF5/eIF-5 and methionyl-tRNAi form a multifactor complex (MFC) that may bind to the 40S ribosome.

The protein localises to the cytoplasm. Its subcellular location is the cytosol. The catalysed reaction is GTP + H2O = GDP + phosphate + H(+). Functionally, as a subunit of eukaryotic initiation factor 2 eIF2, involved in the early steps of protein synthesis. In the presence of GTP, eIF-2 forms a ternary complex with initiator tRNA Met-tRNAi and then recruits the 40S ribosomal complex and initiation factors eIF-1, eIF-1A and eIF-3 to form the 43S pre-initiation complex (43S PIC), a step that determines the rate of protein translation. The 43S PIC binds to mRNA and scans downstream to the initiation codon, where it forms a 48S initiation complex by codon-anticodon base pairing. This leads to the displacement of eIF-1 to allow GTPase-activating protein (GAP) eIF-5-mediated hydrolysis of eIF2-bound GTP. Hydrolysis of GTP and release of Pi, which makes GTP hydrolysis irreversible, causes the release of the eIF-2-GDP binary complex from the 40S subunit, an event that is essential for the subsequent joining of the 60S ribosomal subunit to form an elongation-competent 80S ribosome. In order for eIF-2 to recycle and catalyze another round of initiation, the GDP bound to eIF-2 must be exchanged with GTP by way of a reaction catalyzed by GDP-GTP exchange factor (GEF) eIF-2B. This is Eukaryotic translation initiation factor 2 subunit gamma from Encephalitozoon cuniculi (strain GB-M1) (Microsporidian parasite).